Reading from the N-terminus, the 518-residue chain is ETHYLENE INSENSITIVE 3-like 2 protein (518 aa).

Positions 37-73 (DDLSSDEEMEIEELEKKIWRDKQRLKRLKEMAKNGLG) form a coiled coil. Residues 450-518 (FNHPNDLYRP…GQELPTSWIQ (69 aa)) form a disordered region. Polar residues-rich tracts occupy residues 475–484 (PSPSTLNQNL) and 500–518 (GTENNLHNQGQELPTSWIQ).

This sequence belongs to the EIN3 family. In terms of assembly, acts as a homodimer to bind the primary ethylene response element.

It is found in the nucleus. In terms of biological role, probable transcription factor acting as a positive regulator in the ethylene response pathway. Could bind the primary ethylene response element present in the ETHYLENE-RESPONSE-FACTOR1 promoter. The polypeptide is ETHYLENE INSENSITIVE 3-like 2 protein (EIL2) (Arabidopsis thaliana (Mouse-ear cress)).